A 150-amino-acid polypeptide reads, in one-letter code: Arginine repressor (150 aa).

Belongs to the ArgR family.

It is found in the cytoplasm. The protein operates within amino-acid biosynthesis; L-arginine biosynthesis [regulation]. Its function is as follows. Regulates arginine biosynthesis genes. The chain is Arginine repressor from Desulforudis audaxviator (strain MP104C).